A 558-amino-acid chain; its full sequence is MDTLAGILQVASVVLVLVLIHRPLGDLMARMYESRHDSRVERGIYRLIGVDPRSEQTWPAYLRAVLAFSLVGVLVVYGLQRLQAFLPYALGLPAVPEGLSFNTAVSFVTNTNWQSYSPEATMGYTVQLAGLAVQNFVSAAVGIAVAIALVRGFARTRTGTIGNLWVDLIRGSLRLLLPLSLVTAVILIAGGVIQNFAGFQDVATLAGGSQTIPGGPVASQEAIKMLGTNGGGFFNANSAHPFEDPTAWTSAFQVILMLAIPFSLPRTFGKMVGDTRQGTAIVAVMATIFVVSFTALTIFELNGQGTAPMAAGGAMEGKEQRFGIIASTLFGSASTLTSTGAVNSMHDSYTALGGMMPMINMMLGEVAPGGTGSGLYGMLILAVISVFVAGLLVGRTPEYLGKKIGPREIKLASLYILVTPILVLVGTALSFAIPAVRDDVEGTSILNSGLHGLSEVVYAFTSAANNNGSAFAGLTASTPWFNTALGVAMLLGRFLPIVFVLALAGSLAAQDRIPTTSGTLPTHRPQFVGLLIGVTVIVTALTYFPVLALGPLAEGLAS.

11 consecutive transmembrane segments (helical) span residues 1 to 21, 59 to 79, 85 to 105, 130 to 150, 179 to 199, 245 to 265, 279 to 299, 374 to 394, 416 to 436, 484 to 504, and 527 to 547; these read MDTL…VLIH, PAYL…VYGL, FLPY…NTAV, GLAV…IALV, LSLV…FAGF, PTAW…FSLP, TAIV…LTIF, GLYG…LLVG, ILVT…IPAV, ALGV…LALA, and FVGL…FPVL.

Belongs to the KdpA family. The system is composed of three essential subunits: KdpA, KdpB and KdpC.

It is found in the cell membrane. Its function is as follows. Part of the high-affinity ATP-driven potassium transport (or Kdp) system, which catalyzes the hydrolysis of ATP coupled with the electrogenic transport of potassium into the cytoplasm. This subunit binds the extracellular potassium ions and delivers the ions to the membrane domain of KdpB through an intramembrane tunnel. The chain is Potassium-transporting ATPase potassium-binding subunit from Clavibacter michiganensis subsp. michiganensis (strain NCPPB 382).